Consider the following 356-residue polypeptide: D-alanine--D-alanine ligase (356 aa).

The region spanning 134–339 (KQLFEHRGLP…YPELITKLIE (206 aa)) is the ATP-grasp domain. Residue 167-222 (NDKLNYPVFVKPANLGSSIGISKCSNEVELKEGIKEAFQFDRKLVIEQGVNAREIE) coordinates ATP. The Mg(2+) site is built by D293, E306, and N308.

Belongs to the D-alanine--D-alanine ligase family. Mg(2+) is required as a cofactor. It depends on Mn(2+) as a cofactor.

Its subcellular location is the cytoplasm. The catalysed reaction is 2 D-alanine + ATP = D-alanyl-D-alanine + ADP + phosphate + H(+). The protein operates within cell wall biogenesis; peptidoglycan biosynthesis. Its function is as follows. Cell wall formation. The protein is D-alanine--D-alanine ligase of Staphylococcus aureus (strain MRSA252).